We begin with the raw amino-acid sequence, 105 residues long: Small ribosomal subunit protein uS10 (105 aa).

The protein belongs to the universal ribosomal protein uS10 family. Part of the 30S ribosomal subunit.

Its function is as follows. Involved in the binding of tRNA to the ribosomes. The chain is Small ribosomal subunit protein uS10 from Synechococcus sp. (strain JA-3-3Ab) (Cyanobacteria bacterium Yellowstone A-Prime).